The sequence spans 481 residues: Velvet complex subunit B (481 aa).

Disordered regions lie at residues 1–157 (MNSA…YSKI) and 241–339 (GTGA…NGYG). Composition is skewed to pro residues over residues 36–45 (HPPPPLPPPS), 53–62 (PPLPPPPSAP), and 96–112 (PYAP…QYPR). The region spanning 160–464 (GSGWKYSLDV…ANQGIKIPIR (305 aa)) is the Velvet domain. Low complexity-rich tracts occupy residues 241-255 (GTGA…TYSS) and 293-325 (QQSY…SAEP).

Belongs to the velvet family. VelB subfamily. In terms of assembly, component of the heterotrimeric velvet complex composed of laeA, veA and velB; VeA acting as a bridging protein between laeA and velB. Forms a heterodimeric complex with vosA; the formation of the velB-vosA complex is light-dependent.

It is found in the nucleus. Its subcellular location is the cytoplasm. Functionally, component of the velvet transcription factor complex that controls sexual/asexual developmental ratio in response to light, promoting sexual development in the darkness while stimulating asexual sporulation under illumination. The velvet complex acts as a global regulator for secondary metabolite gene expression. Component of the velB-VosA heterodimeric complex that plays a dual role in activating genes associated with spore maturation and repressing certain development-associated genes. The velB-VosA complex binds DNA through the DNA-binding domain of vosA that recognizes an 11-nucleotide consensus sequence 5'-CTGGCCGCGGC-3' consisting of two motifs in the promoters of key developmental regulatory genes. Controls the biosynthetic gene cluster for beauvericin, a depsipeptide mycotoxin that functions as a virulence determinant. Also regulates chromatin structure and transcription of siderophore biosynthetic genes and is required for infection of tomato plants. The protein is Velvet complex subunit B of Fusarium oxysporum f. sp. lycopersici (strain 4287 / CBS 123668 / FGSC 9935 / NRRL 34936) (Fusarium vascular wilt of tomato).